We begin with the raw amino-acid sequence, 267 residues long: Sorbitol-6-phosphate 2-dehydrogenase (267 aa).

9-38 (DNVIIVTGGASGIGLAIVDELLSQGAHVQM) is a binding site for NAD(+). Ser-147 is a binding site for substrate. Tyr-160 serves as the catalytic Proton acceptor.

Belongs to the short-chain dehydrogenases/reductases (SDR) family. As to quaternary structure, homotetramer.

It carries out the reaction D-sorbitol 6-phosphate + NAD(+) = beta-D-fructose 6-phosphate + NADH + H(+). The protein operates within carbohydrate metabolism; D-sorbitol degradation; D-fructose 6-phosphate from D-sorbitol 6-phosphate: step 1/1. In Klebsiella pneumoniae, this protein is Sorbitol-6-phosphate 2-dehydrogenase (sorD).